The primary structure comprises 104 residues: Large ribosomal subunit protein bL21 (104 aa).

Belongs to the bacterial ribosomal protein bL21 family. Part of the 50S ribosomal subunit. Contacts protein L20.

This protein binds to 23S rRNA in the presence of protein L20. This chain is Large ribosomal subunit protein bL21, found in Desulfosudis oleivorans (strain DSM 6200 / JCM 39069 / Hxd3) (Desulfococcus oleovorans).